The following is a 298-amino-acid chain: HTH-type transcriptional regulator CzcR (298 aa).

The region spanning 11–68 (MELRDLQIFQSVADQGSVSSAAKELNYVQSNVTARIKQLENELKTPLFYRHKRGMTLT) is the HTH lysR-type domain. Positions 28-47 (VSSAAKELNYVQSNVTARIK) form a DNA-binding region, H-T-H motif.

It belongs to the LysR transcriptional regulatory family.

This chain is HTH-type transcriptional regulator CzcR (czcR), found in Bacillus thuringiensis (strain Al Hakam).